Here is a 488-residue protein sequence, read N- to C-terminus: MVMQFQGLENPIQISLHHSHRLSGFVPEGMSVKPAKGMLTEHAAGPLGQNLDLESYSPYNNVPFPQVQPQISSSSYYSNLGFYPQQPEDWYSPGIYELRRMPAETGYQGETEVSEMPVTKKPRMAAASAGRIKGDELCVVCGDRASGYHYNALTCEGCKGFFRRSITKNAVYKCKNGGNCVMDMYMRRKCQECRLRKCKEMGMLAECMYTGLLTEIQCKSKRLRKNVKQHADQTANEDDSEGRDLRQVTSTTKFCREKTELTADQQTLLDYIMDSYNKQRMPQEITNKILKEEFSAEENFLILTEMATSHVQILVEFTKKLPGFQTLDHEDQIALLKGSAVEAMFLRSAEIFNKKLPAGHADLLEERIRKSGISDEYITPMFSFYKSVGELKMTQEEYALLTAIVILSPDRQYIKDREAVEKLQEPLLDVLQKLCKMYQPENPQHFACLLGRLTELRTFNHHHAEMLMSWRVNDHKFTPLLCEIWDVQ.

A Glycyl lysine isopeptide (Lys-Gly) (interchain with G-Cter in SUMO1) cross-link involves residue K133. The segment at residues 135 to 210 (DELCVVCGDR…MGMLAECMYT (76 aa)) is a DNA-binding region (nuclear receptor). The segment at 138–158 (CVVCGDRASGYHYNALTCEGC) adopts an NR C4-type zinc-finger fold. Phosphoserine; by PKC/PRKCA is present on residues S146 and S165. The residue at position 168 (K168) is an N6-acetyllysine; by EP300. The NR C4-type zinc-finger motif lies at 174-198 (CKNGGNCVMDMYMRRKCQECRLRKC). At K221 the chain carries N6-methyllysine; by SETD7. An N6-acetyllysine; by EP300 modification is found at K228. The 225-residue stretch at 264–488 (DQQTLLDYIM…PLLCEIWDVQ (225 aa)) folds into the NR LBD domain. Residue K291 forms a Glycyl lysine isopeptide (Lys-Gly) (interchain with G-Cter in SUMO1) linkage. Chenodeoxycholate is bound by residues R347, Y377, and Y385. Residue T458 is modified to Phosphothreonine; by PKC/PRKCZ. H463 is a chenodeoxycholate binding site.

The protein belongs to the nuclear hormone receptor family. NR1 subfamily. As to quaternary structure, heterodimer with RXRA; the heterodimerization enhances the binding affinity for LXXLL motifs from coactivators. Binds DNA predominantly as a heterodimer with RXRA. After activation by agonist binding interacts with coactivators. Interacts with PPARGC1A, SMARCA4 and EP300. Interacts with NCOA1, NCOA2, CARM1, SETD7, PRMT1, GPS2, SMARCA4 and MED1. Interacts with XRCC5 and XRCC6; decreasing NR1H4/FXR transactivation activity towards ABCB11/BSEP. Interacts with PAGR1 and NCOA6; indicative for an association with an MLL2/MLL3 complex (ASCOM). Interacts with NR5A2. Post-translationally, acetylated by EP300. Lys-228 as is the major acetylation site for EP300; the dynamicly regulated acetylation inhibits heterodimerization with RXRA and transactivation activity. Deacetylated by SIRT1. Elevated acetylation levels are found in metabolic disease states (mouse models of obesity and type II diabetes). Methylation may increase transactivation of target genes. In terms of processing, phosphorylation by PKC/PRKCA increases transactivation activity by promoting association with PPARGC1A. Post-translationally, sumoylated upon ligand binding. Expressed in liver and kidney. Expressed in pancreatic beta cells and macrophages. Expressed in the villus epithelium in adult ileum, with highest expression in the intervillus regions. Expression in colon is reduced by inflammation.

The protein resides in the nucleus. Ligand-activated transcription factor. Receptor for bile acids (BAs) such as chenodeoxycholic acid (CDCA), lithocholic acid, deoxycholic acid (DCA) and allocholic acid (ACA). Plays a essential role in BA homeostasis through the regulation of genes involved in BA synthesis, conjugation and enterohepatic circulation. Also regulates lipid and glucose homeostasis and is involved in innate immune response. The FXR-RXR heterodimer binds predominantly to farnesoid X receptor response elements (FXREs) containing two inverted repeats of the consensus sequence 5'-AGGTCA-3' in which the monomers are spaced by 1 nucleotide (IR-1) but also to tandem repeat DR1 sites with lower affinity, and can be activated by either FXR or RXR-specific ligands. It is proposed that monomeric nuclear receptors such as NR5A2/LRH-1 bound to coregulatory nuclear responsive element (NRE) halfsites located in close proximity to FXREs modulate transcriptional activity. In the liver activates transcription of the corepressor NR0B2 thereby indirectly inhibiting CYP7A1 and CYP8B1 (involved in BA synthesis) implicating at least in part histone demethylase KDM1A resulting in epigenomic repression, and SLC10A1/NTCP (involved in hepatic uptake of conjugated BAs). Activates transcription of the repressor MAFG (involved in regulation of BA synthesis). Activates transcription of SLC27A5/BACS and BAAT (involved in BA conjugation), ABCB11/BSEP (involved in bile salt export) by directly recruiting histone methyltransferase CARM1, and ABCC2/MRP2 (involved in secretion of conjugated BAs) and ABCB4 (involved in secretion of phosphatidylcholine in the small intestine). In ileal enterocytes activates FABP6/IBABP (involved in cytosolic transport), SLC51A/OSTA and SLC51B/OSTB (involved in secretion of conjugated BAs to the portal blood), and repressor NR0B2/SHP thereby indirectly inhibiting SLC10A2/ASBT (involved in BA uptake). In the intestine activates FGF15 expression and secretion leading to hepatic CYP7A1 repression; the function also involves the coordinated induction of hepatic KLB/beta-klotho expression. Transcriptional activation of FABP6/IBAP and SCD1 but not of ABCB11 is isoform-specific. Regulates transcription of liver UGT2B4 and SULT2A1 involved in BA detoxification; binding to the UGT2B4 promoter seems to imply a monomeric transactivation independent of RXRA. Modulates lipid homeostasis by activating liver NR0B2/SHP-mediated repression of SREBF1 isoform SREBP-1C (involved in de novo lipogenesis), expression of PLTP (involved in HDL formation), SCARB1 (involved in HDL hepatic uptake), APOE, APOC1, APOC4, VLDLR and SDC1 (involved in the hepatic uptake of LDL and IDL remnants), and inhibiting expression of MTTP (involved in VLDL assembly). Increases expression of APOC2 (promoting lipoprotein lipase activity implicated in triglyceride clearance). Transrepresses APOA1 probably involving a monomeric competition with NR2A1 for binding to a DR1 element. Also reduces triglyceride clearance by inhibiting expression of ANGPTL3 and APOC3 (both involved in inhibition of lipoprotein lipase). Involved in glucose homeostasis by modulating hepatic gluconeogenesis through activation of NR0B2/SHP-mediated repression of respective genes. Modulates glycogen synthesis (inducing phosphorylation of glycogen synthase kinase-3). Modulates glucose-stimulated insulin secretion and is involved in insulin resistance. Involved in intestinal innate immunity. Plays a role in protecting the distal small intestine against bacterial overgrowth and preservation of the epithelial barrier. Down-regulates inflammatory cytokine expression in several types of immune cells including macrophages and mononuclear cells. Mediates transrepression of TLR4-induced cytokine expression; the function seems to require its sumoylation and prevents N-CoR nuclear receptor corepressor clearance from target genes such as IL1B and NOS2. Involved in the TLR9-mediated protective mechanism in intestinal inflammation. Plays a anti-inflammatory role in liver inflammation; proposed to inhibit pro-inflammatory (but not antiapoptotic) NF-kappa-B signaling. Its function is as follows. Activates transcription of IBAP and SDC1. This Mus musculus (Mouse) protein is Bile acid receptor (Nr1h4).